Consider the following 327-residue polypeptide: Peroxidase N (327 aa).

An N-terminal signal peptide occupies residues Met-1–Ala-28. Pyrrolidone carboxylic acid is present on Gln-29. Disulfide bonds link Cys-39–Cys-116, Cys-72–Cys-77, Cys-122–Cys-323, and Cys-200–Cys-232. His-70 acts as the Proton acceptor in catalysis. Ca(2+) is bound by residues Asp-71, Val-74, Gly-76, Asp-78, and Ser-80. The N-linked (GlcNAc...) asparagine glycan is linked to Asn-155. Residue Pro-163 coordinates substrate. Asn-182 is a glycosylation site (N-linked (GlcNAc...) asparagine). His-193 contributes to the heme b binding site. Residue Thr-194 participates in Ca(2+) binding. Residues Asn-209 and Asn-239 are each glycosylated (N-linked (GlcNAc...) asparagine). Asp-245 provides a ligand contact to Ca(2+). A glycan (N-linked (GlcNAc...) asparagine) is linked at Asn-247. Positions 248 and 253 each coordinate Ca(2+). The N-linked (GlcNAc...) asparagine glycan is linked to Asn-281.

This sequence belongs to the peroxidase family. Classical plant (class III) peroxidase subfamily. Requires Ca(2+) as cofactor. Heme b serves as cofactor.

It localises to the secreted. It catalyses the reaction 2 a phenolic donor + H2O2 = 2 a phenolic radical donor + 2 H2O. Functionally, removal of H(2)O(2), oxidation of toxic reductants, biosynthesis and degradation of lignin, suberization, auxin catabolism, response to environmental stresses such as wounding, pathogen attack and oxidative stress. These functions might be dependent on each isozyme/isoform in each plant tissue. This is Peroxidase N (HRPN) from Armoracia rusticana (Horseradish).